The sequence spans 54 residues: Large ribosomal subunit protein bL33A (54 aa).

It belongs to the bacterial ribosomal protein bL33 family.

This is Large ribosomal subunit protein bL33A from Mesoplasma florum (strain ATCC 33453 / NBRC 100688 / NCTC 11704 / L1) (Acholeplasma florum).